The chain runs to 486 residues: NADH-quinone oxidoreductase subunit N 1 (486 aa).

The next 14 membrane-spanning stretches (helical) occupy residues 15–35, 46–66, 72–92, 111–128, 131–151, 166–186, 208–228, 241–261, 276–296, 303–323, 331–351, 375–395, 410–432, and 455–475; these read FLPEIILTVMGTLLMVLDPVI, ISLIALVMALGASIYAYGIAG, MLMVDGFATFFRVVVITVGIL, YHALLLFSIAGQCLMAAS, LIMVFIGLEISSIASYVLAGY, FLLGSFATGFFLYGVAWIYGL, FVGIAAALMFVGLAFKVSAAP, PTPVSAFLSAGPKAAAFAIFL, QPLVWTAALASMCIGNFAAIL, MLAYSSIAHAGYVLVALTAHS, MFYLAGYAFMNVGAFAAVSVL, AAMFTIFLLSLLGVPLTGGFF, IWLTVLGLLNSAVGAYYYLRILV, and FALILPALGTLALGIFPGWVL.

The protein belongs to the complex I subunit 2 family. NDH-1 is composed of 14 different subunits. Subunits NuoA, H, J, K, L, M, N constitute the membrane sector of the complex.

It localises to the cell inner membrane. The enzyme catalyses a quinone + NADH + 5 H(+)(in) = a quinol + NAD(+) + 4 H(+)(out). In terms of biological role, NDH-1 shuttles electrons from NADH, via FMN and iron-sulfur (Fe-S) centers, to quinones in the respiratory chain. The immediate electron acceptor for the enzyme in this species is believed to be ubiquinone. Couples the redox reaction to proton translocation (for every two electrons transferred, four hydrogen ions are translocated across the cytoplasmic membrane), and thus conserves the redox energy in a proton gradient. The protein is NADH-quinone oxidoreductase subunit N 1 of Solibacter usitatus (strain Ellin6076).